The primary structure comprises 209 residues: V-type ATP synthase subunit D (209 aa).

This sequence belongs to the V-ATPase D subunit family.

Its function is as follows. Produces ATP from ADP in the presence of a proton gradient across the membrane. This chain is V-type ATP synthase subunit D, found in Anaeromyxobacter dehalogenans (strain 2CP-1 / ATCC BAA-258).